Here is a 149-residue protein sequence, read N- to C-terminus: 3-hydroxyacyl-[acyl-carrier-protein] dehydratase FabZ (149 aa).

His53 is a catalytic residue.

Belongs to the thioester dehydratase family. FabZ subfamily.

It is found in the cytoplasm. It carries out the reaction a (3R)-hydroxyacyl-[ACP] = a (2E)-enoyl-[ACP] + H2O. Functionally, involved in unsaturated fatty acids biosynthesis. Catalyzes the dehydration of short chain beta-hydroxyacyl-ACPs and long chain saturated and unsaturated beta-hydroxyacyl-ACPs. The protein is 3-hydroxyacyl-[acyl-carrier-protein] dehydratase FabZ of Neisseria gonorrhoeae (strain ATCC 700825 / FA 1090).